Here is a 365-residue protein sequence, read N- to C-terminus: Aminomethyltransferase (365 aa).

This sequence belongs to the GcvT family. In terms of assembly, the glycine cleavage system is composed of four proteins: P, T, L and H.

It carries out the reaction N(6)-[(R)-S(8)-aminomethyldihydrolipoyl]-L-lysyl-[protein] + (6S)-5,6,7,8-tetrahydrofolate = N(6)-[(R)-dihydrolipoyl]-L-lysyl-[protein] + (6R)-5,10-methylene-5,6,7,8-tetrahydrofolate + NH4(+). Its function is as follows. The glycine cleavage system catalyzes the degradation of glycine. This Yersinia pseudotuberculosis serotype O:1b (strain IP 31758) protein is Aminomethyltransferase.